Here is a 356-residue protein sequence, read N- to C-terminus: MDKEKLDVKIEYCNYAMDSSVENMYVNKVWVQCENENCLKWRLLSSEDSAKVDHDEPWYCFMNTDSRYNNCSISEEDFPEESQLHQCGFKIVYSQLPLGSLVLVKLQNWPSWPGILCPDRFKGKYVTYDPDGNVEEYHIEFLGDPHSRSWIKATFVGHYSITLKPEKCKNKKKWYKSALQEACLLYGYSHEQRLEMCCLSKLQDKSETHDKVAALVKKRKQTSKNNIEKKKPKFRKRKRKAILKCSFENVYSDDALSKENRVVCETEVLLKELEQMLQQALQPTATPDESEEGHGEEINMGEKLSKCSPEAPAGSLFENHYEEDYLVIDGIKLKAGECIEDITNKFKEIDALMSEF.

The segment at 24 to 79 adopts a CW-type zinc-finger fold; sequence MYVNKVWVQCENENCLKWRLLSSEDSAKVDHDEPWYCFMNTDSRYNNCSISEEDFP. 4 residues coordinate Zn(2+): cysteine 33, cysteine 38, cysteine 60, and cysteine 71. Residues 98–162 form the PWWP domain; sequence LGSLVLVKLQ…ATFVGHYSIT (65 aa). A disordered region spans residues 279–307; that stretch reads QALQPTATPDESEEGHGEEINMGEKLSKC.

Functionally, histone methylation reader which binds to non-methylated (H3K4me0), monomethylated (H3K4me1), dimethylated (H3K4me2) and trimethylated (H3K4me3) 'Lys-4' on histone H3. The order of binding preference is H3K4me3 &gt; H3K4me2 &gt; H3K4me1 &gt; H3K4me0. The protein is Zinc finger CW-type PWWP domain protein 2 (ZCWPW2) of Homo sapiens (Human).